Consider the following 30-residue polypeptide: Varv peptide G (30 aa).

Positions 1-30 (GVPVCGETCFGGTCNTPGCSCDPWPVCSRN) form a cross-link, cyclopeptide (Gly-Asn). 3 disulfide bridges follow: Cys5-Cys19, Cys9-Cys21, and Cys14-Cys27.

This is a cyclic peptide.

Probably participates in a plant defense mechanism. The chain is Varv peptide G from Viola arvensis (European field pansy).